A 362-amino-acid chain; its full sequence is Methylthioribose-1-phosphate isomerase (362 aa).

The Proton donor role is filled by D252.

The protein belongs to the eIF-2B alpha/beta/delta subunits family. MtnA subfamily.

The protein resides in the cytoplasm. It is found in the nucleus. The enzyme catalyses 5-(methylsulfanyl)-alpha-D-ribose 1-phosphate = 5-(methylsulfanyl)-D-ribulose 1-phosphate. The protein operates within amino-acid biosynthesis; L-methionine biosynthesis via salvage pathway; L-methionine from S-methyl-5-thio-alpha-D-ribose 1-phosphate: step 1/6. In terms of biological role, catalyzes the interconversion of methylthioribose-1-phosphate (MTR-1-P) into methylthioribulose-1-phosphate (MTRu-1-P). The polypeptide is Methylthioribose-1-phosphate isomerase (Drosophila virilis (Fruit fly)).